Here is a 123-residue protein sequence, read N- to C-terminus: Small ribosomal subunit protein uS12 (123 aa).

3-methylthioaspartic acid is present on aspartate 89. The segment at 104-123 (SVGVKDRKKSRSKYGAKRPK) is disordered. Positions 109–123 (DRKKSRSKYGAKRPK) are enriched in basic residues.

The protein belongs to the universal ribosomal protein uS12 family. Part of the 30S ribosomal subunit. Contacts proteins S8 and S17. May interact with IF1 in the 30S initiation complex.

With S4 and S5 plays an important role in translational accuracy. In terms of biological role, interacts with and stabilizes bases of the 16S rRNA that are involved in tRNA selection in the A site and with the mRNA backbone. Located at the interface of the 30S and 50S subunits, it traverses the body of the 30S subunit contacting proteins on the other side and probably holding the rRNA structure together. The combined cluster of proteins S8, S12 and S17 appears to hold together the shoulder and platform of the 30S subunit. The sequence is that of Small ribosomal subunit protein uS12 from Geotalea daltonii (strain DSM 22248 / JCM 15807 / FRC-32) (Geobacter daltonii).